A 387-amino-acid chain; its full sequence is Formate-dependent phosphoribosylglycinamide formyltransferase (387 aa).

Residues E15–L16 and E75 each bind N(1)-(5-phospho-beta-D-ribosyl)glycinamide. ATP is bound by residues R106, K147, S152–Q157, E187–I190, and E195. Residues D111–L301 form the ATP-grasp domain. Residues E260 and E272 each contribute to the Mg(2+) site. N(1)-(5-phospho-beta-D-ribosyl)glycinamide contacts are provided by residues D279, K349, and R356–R357.

The protein belongs to the PurK/PurT family. Homodimer.

The enzyme catalyses N(1)-(5-phospho-beta-D-ribosyl)glycinamide + formate + ATP = N(2)-formyl-N(1)-(5-phospho-beta-D-ribosyl)glycinamide + ADP + phosphate + H(+). Its pathway is purine metabolism; IMP biosynthesis via de novo pathway; N(2)-formyl-N(1)-(5-phospho-D-ribosyl)glycinamide from N(1)-(5-phospho-D-ribosyl)glycinamide (formate route): step 1/1. In terms of biological role, involved in the de novo purine biosynthesis. Catalyzes the transfer of formate to 5-phospho-ribosyl-glycinamide (GAR), producing 5-phospho-ribosyl-N-formylglycinamide (FGAR). Formate is provided by PurU via hydrolysis of 10-formyl-tetrahydrofolate. This is Formate-dependent phosphoribosylglycinamide formyltransferase from Prochlorococcus marinus (strain NATL1A).